Consider the following 797-residue polypeptide: Probable exo-1,4-beta-xylosidase bxlB (797 aa).

The N-terminal stretch at 1–21 is a signal peptide; the sequence is MPLICIVYFLQYLDKIAISYA. N86 and N126 each carry an N-linked (GlcNAc...) asparagine glycan. D312 is a catalytic residue. N-linked (GlcNAc...) asparagine glycosylation is found at N364, N431, N442, N483, N644, and N787.

It belongs to the glycosyl hydrolase 3 family.

It localises to the secreted. The enzyme catalyses Hydrolysis of (1-&gt;4)-beta-D-xylans, to remove successive D-xylose residues from the non-reducing termini.. The protein operates within glycan degradation; xylan degradation. Xylan 1,4-beta-xylosidase involved in the hydrolysis of xylan, a major structural heterogeneous polysaccharide found in plant biomass representing the second most abundant polysaccharide in the biosphere, after cellulose. The polypeptide is Probable exo-1,4-beta-xylosidase bxlB (bxlB) (Aspergillus oryzae (strain ATCC 42149 / RIB 40) (Yellow koji mold)).